The chain runs to 252 residues: Imidazole glycerol phosphate synthase subunit HisF (252 aa).

Active-site residues include Asp11 and Asp130.

This sequence belongs to the HisA/HisF family. In terms of assembly, heterodimer of HisH and HisF.

The protein localises to the cytoplasm. It carries out the reaction 5-[(5-phospho-1-deoxy-D-ribulos-1-ylimino)methylamino]-1-(5-phospho-beta-D-ribosyl)imidazole-4-carboxamide + L-glutamine = D-erythro-1-(imidazol-4-yl)glycerol 3-phosphate + 5-amino-1-(5-phospho-beta-D-ribosyl)imidazole-4-carboxamide + L-glutamate + H(+). It participates in amino-acid biosynthesis; L-histidine biosynthesis; L-histidine from 5-phospho-alpha-D-ribose 1-diphosphate: step 5/9. Functionally, IGPS catalyzes the conversion of PRFAR and glutamine to IGP, AICAR and glutamate. The HisF subunit catalyzes the cyclization activity that produces IGP and AICAR from PRFAR using the ammonia provided by the HisH subunit. The chain is Imidazole glycerol phosphate synthase subunit HisF from Polynucleobacter necessarius subsp. necessarius (strain STIR1).